A 558-amino-acid chain; its full sequence is Dihydroxy-acid dehydratase (558 aa).

D78 provides a ligand contact to Mg(2+). C119 lines the [2Fe-2S] cluster pocket. 2 residues coordinate Mg(2+): D120 and K121. The residue at position 121 (K121) is an N6-carboxylysine. C192 lines the [2Fe-2S] cluster pocket. E446 lines the Mg(2+) pocket. S472 (proton acceptor) is an active-site residue.

The protein belongs to the IlvD/Edd family. As to quaternary structure, homodimer. [2Fe-2S] cluster is required as a cofactor. The cofactor is Mg(2+).

The enzyme catalyses (2R)-2,3-dihydroxy-3-methylbutanoate = 3-methyl-2-oxobutanoate + H2O. It carries out the reaction (2R,3R)-2,3-dihydroxy-3-methylpentanoate = (S)-3-methyl-2-oxopentanoate + H2O. It participates in amino-acid biosynthesis; L-isoleucine biosynthesis; L-isoleucine from 2-oxobutanoate: step 3/4. It functions in the pathway amino-acid biosynthesis; L-valine biosynthesis; L-valine from pyruvate: step 3/4. In terms of biological role, functions in the biosynthesis of branched-chain amino acids. Catalyzes the dehydration of (2R,3R)-2,3-dihydroxy-3-methylpentanoate (2,3-dihydroxy-3-methylvalerate) into 2-oxo-3-methylpentanoate (2-oxo-3-methylvalerate) and of (2R)-2,3-dihydroxy-3-methylbutanoate (2,3-dihydroxyisovalerate) into 2-oxo-3-methylbutanoate (2-oxoisovalerate), the penultimate precursor to L-isoleucine and L-valine, respectively. The protein is Dihydroxy-acid dehydratase of Campylobacter lari (strain RM2100 / D67 / ATCC BAA-1060).